Consider the following 725-residue polypeptide: Putative coiled-coil domain-containing protein 144B (725 aa).

A compositionally biased stretch (basic and acidic residues) spans 1–11 (MASWGGEKRGG). Disordered regions lie at residues 1-25 (MASW…ATRK), 87-188 (AARS…NLTE), 213-260 (LPEN…DCDR), 453-485 (NMNQ…DSDR), and 528-586 (EEEM…KVKN). Polar residues-rich tracts occupy residues 129-150 (PESL…LSDE) and 165-178 (PSVS…QSAT). Residues 215–244 (ENKESKEAEQDLELTSEEEQERLKGCENKQ) are a coiled coil. The segment covering 224–234 (QDLELTSEEEQ) has biased composition (acidic residues). Residues 453–467 (NMNQNSDSGSTNNYK) show a composition bias toward polar residues. Residues 490 to 546 (YLHEELQQDMQKFKNEVNTLEEEFLALKKENVQLHKEVEEEMEKHRSNSTELSGTLT) adopt a coiled-coil conformation. Residues 528–537 (EEEMEKHRSN) show a composition bias toward basic and acidic residues. A compositionally biased stretch (low complexity) spans 543–552 (GTLTDGTTVG). Over residues 563-583 (PRKENEEHDRPADKTANEKNK) the composition is skewed to basic and acidic residues. Positions 648–713 (LLKLKNNHCD…ALKQENGRKE (66 aa)) form a coiled coil.

It belongs to the CCDC144 family.

The sequence is that of Putative coiled-coil domain-containing protein 144B from Homo sapiens (Human).